We begin with the raw amino-acid sequence, 474 residues long: Glycogen synthase (474 aa).

Residue lysine 15 participates in ADP-alpha-D-glucose binding.

The protein belongs to the glycosyltransferase 1 family. Bacterial/plant glycogen synthase subfamily.

It catalyses the reaction [(1-&gt;4)-alpha-D-glucosyl](n) + ADP-alpha-D-glucose = [(1-&gt;4)-alpha-D-glucosyl](n+1) + ADP + H(+). Its pathway is glycan biosynthesis; glycogen biosynthesis. Functionally, synthesizes alpha-1,4-glucan chains using ADP-glucose. In Chlamydia trachomatis serovar D (strain ATCC VR-885 / DSM 19411 / UW-3/Cx), this protein is Glycogen synthase.